Reading from the N-terminus, the 478-residue chain is Proline--tRNA ligase (478 aa).

This sequence belongs to the class-II aminoacyl-tRNA synthetase family. ProS type 3 subfamily. Homodimer.

Its subcellular location is the cytoplasm. It carries out the reaction tRNA(Pro) + L-proline + ATP = L-prolyl-tRNA(Pro) + AMP + diphosphate. Its function is as follows. Catalyzes the attachment of proline to tRNA(Pro) in a two-step reaction: proline is first activated by ATP to form Pro-AMP and then transferred to the acceptor end of tRNA(Pro). In Methanococcoides burtonii (strain DSM 6242 / NBRC 107633 / OCM 468 / ACE-M), this protein is Proline--tRNA ligase.